We begin with the raw amino-acid sequence, 202 residues long: MDLTIVGSDNTLPVSDVVFGREFSEALVHQIVVAYRNTARSGTKAQKSRSQVSGTTKKSKKQKGGGARHGALTAPIFVGGGVAFAAKPRSFSQKVNRKQYRSAICSIFSELNRQGRLKVVDAFDVEVSKTKVFAEKIKSLEVVGSRLLIVSDGISECLSLSSRNLPCVDVRSVQALDPVALVGSDVVVLTVGAVKKIEEWLV.

The segment covering 42-52 (GTKAQKSRSQV) has biased composition (polar residues). The tract at residues 42-70 (GTKAQKSRSQVSGTTKKSKKQKGGGARHG) is disordered.

It belongs to the universal ribosomal protein uL4 family. As to quaternary structure, part of the 50S ribosomal subunit.

In terms of biological role, one of the primary rRNA binding proteins, this protein initially binds near the 5'-end of the 23S rRNA. It is important during the early stages of 50S assembly. It makes multiple contacts with different domains of the 23S rRNA in the assembled 50S subunit and ribosome. Functionally, forms part of the polypeptide exit tunnel. The polypeptide is Large ribosomal subunit protein uL4 (Xylella fastidiosa (strain 9a5c)).